A 525-amino-acid chain; its full sequence is uncharacterized protein (525 aa).

The segment at residues 21 to 48 is a DNA-binding region (zn(2)-C6 fungal-type); that stretch reads CLICRSMRKKCDEVHPQCGRCLKAGKQC.

The protein resides in the cytoplasm. It is found in the nucleus. This is an uncharacterized protein from Schizosaccharomyces pombe (strain 972 / ATCC 24843) (Fission yeast).